A 361-amino-acid polypeptide reads, in one-letter code: Peptide chain release factor 1 (361 aa).

Glutamine 237 is modified (N5-methylglutamine). Residues 287–306 (KRAAEEASTRKSLVGSGDRS) form a disordered region.

The protein belongs to the prokaryotic/mitochondrial release factor family. Post-translationally, methylated by PrmC. Methylation increases the termination efficiency of RF1.

It localises to the cytoplasm. Functionally, peptide chain release factor 1 directs the termination of translation in response to the peptide chain termination codons UAG and UAA. The protein is Peptide chain release factor 1 of Alteromonas mediterranea (strain DSM 17117 / CIP 110805 / LMG 28347 / Deep ecotype).